We begin with the raw amino-acid sequence, 229 residues long: Transmembrane emp24 domain-containing protein 5 (229 aa).

The N-terminal stretch at 1–27 (MGGRMWLPFPVLLLSALPAALLRGAAG) is a signal peptide. Residues 28–196 (FTPSLDSDFT…IQESNFDRVN (169 aa)) lie on the Lumenal side of the membrane. A GOLD domain is found at 45–126 (KECFYQPMPL…EKVIFFELIL (82 aa)). The chain crosses the membrane as a helical span at residues 197–217 (FWSVVNLMVMVVVSAIQVYTL). The Cytoplasmic segment spans residues 218–229 (KSLFEDKRKSRT).

The protein belongs to the EMP24/GP25L family. In terms of assembly, interacts with TMED9 and TMED10.

It localises to the endoplasmic reticulum membrane. The protein localises to the golgi apparatus. Its subcellular location is the cis-Golgi network membrane. The protein resides in the endoplasmic reticulum-Golgi intermediate compartment membrane. Its function is as follows. Potential role in vesicular protein trafficking, mainly in the early secretory pathway. Required for the maintenance of the Golgi apparatus; involved in protein exchange between Golgi stacks during assembly. Probably not required for COPI-vesicle-mediated retrograde transport. The chain is Transmembrane emp24 domain-containing protein 5 (Tmed5) from Mus musculus (Mouse).